We begin with the raw amino-acid sequence, 130 residues long: Universal stress protein MSMEG_4207 (130 aa).

Lysine 104 bears the N6-acetyllysine mark.

It belongs to the universal stress protein A family. Acetylated on Lys-104 by PatA in the presence of acetyl-CoA as an acetyl donor.

This chain is Universal stress protein MSMEG_4207, found in Mycolicibacterium smegmatis (strain ATCC 700084 / mc(2)155) (Mycobacterium smegmatis).